We begin with the raw amino-acid sequence, 63 residues long: Conotoxin Vi5.1b (63 aa).

A signal peptide spans 1-22; that stretch reads MLCVPVFIILFIIIPFAPTSES. A propeptide spanning residues 23 to 50 is cleaved from the precursor; sequence QPKTKEEVAKASVHDNAERTLQRLWNQS. Pro62 is modified (proline amide).

The protein belongs to the conotoxin T superfamily. In terms of processing, contains 2 disulfide bonds that can be either 'C1-C3, C2-C4' or 'C1-C4, C2-C3', since these disulfide connectivities have been observed for conotoxins with cysteine framework V (for examples, see AC P0DQQ7 and AC P81755). Expressed by the venom duct.

The protein resides in the secreted. The chain is Conotoxin Vi5.1b from Conus virgo (Virgin cone).